The sequence spans 479 residues: Glycine betaine methyltransferase (479 aa).

It belongs to the trimethylamine methyltransferase family.

It carries out the reaction Co(I)-[glycine betaine-specific corrinoid protein] + glycine betaine + H(+) = methyl-Co(III)-[glycine betaine-specific corrinoid protein] + N,N-dimethylglycine. In terms of biological role, methyltransferase able to methylate free cob(I)alamin in vitro, using glycine betaine as the methyl donor, yealding methylcobalamin (methylCbl) and dimethylglycine. In vivo, probably carries out the methylation of a corrinoid protein, likely the adjacently encoded DSY3155, with glycine betaine, to then supply methyl groups to tetrahydrofolate (THF) for ultimate conversion to carbon dioxide; oxidation of the methyl group would also provide reducing equivalents for anaerobic respiration. Thus, may function in the pathway that allows anaerobic methylotrophic growth of D.hafniense using glycine betaine. Cannot use quaternary amines such as carnitine and choline as substrates, nor tertiary amines such as dimethylglycine or trimethylamine. The chain is Glycine betaine methyltransferase from Desulfitobacterium hafniense (strain Y51).